The primary structure comprises 31 residues: Protamine-YI (31 aa).

Residues 1-31 (ARRRRSSSRPIRRRRPRRRTTRRRRAGRRRR) are disordered.

Testis.

It localises to the nucleus. The protein localises to the chromosome. In terms of biological role, protamines substitute for histones in the chromatin of sperm during the haploid phase of spermatogenesis. They compact sperm DNA into a highly condensed, stable and inactive complex. This Clupea harengus (Atlantic herring) protein is Protamine-YI.